Consider the following 477-residue polypeptide: Ankyrin repeat, SAM and basic leucine zipper domain-containing protein 1 (477 aa).

Residues M1–G24 form a disordered region. A phosphoserine mark is found at S17, S18, and S20. ANK repeat units follow at residues E45 to S74, Y78 to F107, D110 to V144, R148 to A177, N181 to L210, and D214 to G243. The region spanning S272–M334 is the SAM domain.

As to quaternary structure, interacts with DDX4, PIWIL1, RANBP9 and TDRD1.

It is found in the cytoplasm. Plays a central role during spermatogenesis by repressing transposable elements and preventing their mobilization, which is essential for the germline integrity. Acts via the piRNA metabolic process, which mediates the repression of transposable elements during meiosis by forming complexes composed of piRNAs and Piwi proteins and governs the methylation and subsequent repression of transposons. Its association with pi-bodies suggests a participation in the primary piRNAs metabolic process. Required prior to the pachytene stage to facilitate the production of multiple types of piRNAs, including those associated with repeats involved in the regulation of retrotransposons. May act by mediating protein-protein interactions during germ cell maturation. This is Ankyrin repeat, SAM and basic leucine zipper domain-containing protein 1 (ASZ1) from Echinops telfairi (Lesser hedgehog tenrec).